The primary structure comprises 691 residues: Proprotein convertase subtilisin/kexin type 9 (691 aa).

The N-terminal stretch at 1 to 29 (MGTVSSRRLWWPLPLLLLLLLLGPAGARA) is a signal peptide. Residues 30 to 151 (QEDDDGDYEE…IEEDSSVFAQ (122 aa)) constitute a propeptide that is removed on maturation. Sulfotyrosine is present on Tyr-37. The residue at position 46 (Ser-46) is a Phosphoserine. In terms of domain architecture, Inhibitor I9 spans 76–148 (TYVVVLKEET…VDYIEEDSSV (73 aa)). A Peptidase S8 domain is found at 154–460 (PWNLERITPA…GWQLFCRTVW (307 aa)). Residues Asp-185 and His-225 each act as charge relay system in the active site. 2 disulfide bridges follow: Cys-222-Cys-254 and Cys-322-Cys-357. The active-site Charge relay system is Ser-385. A C-terminal domain region spans residues 449–691 (GAGWQLFCRT…HLAQASQELQ (243 aa)). Intrachain disulfides connect Cys-456-Cys-526, Cys-476-Cys-525, and Cys-485-Cys-508. The N-linked (GlcNAc...) asparagine glycan is linked to Asn-532. Cystine bridges form between Cys-533–Cys-600, Cys-551–Cys-599, Cys-561–Cys-587, Cys-607–Cys-678, Cys-625–Cys-677, and Cys-634–Cys-653. Ser-687 carries the post-translational modification Phosphoserine.

Belongs to the peptidase S8 family. Monomer. Can self-associate to form dimers and higher multimers which may have increased LDLR degrading activity. The precursor protein but not the mature protein may form multimers. Interacts with APOB, VLDLR, LRP8/APOER2 and BACE1. The full-length immature form (pro-PCSK9) interacts with SCNN1A, SCNN1B and SCNN1G. The pro-PCSK9 form (via C-terminal domain) interacts with LDLR. Interacts (via the C-terminal domain) with ANXA2 (via repeat Annexin 1); the interaction inhibits the degradation of LDLR. The cofactor is Ca(2+). In terms of processing, cleavage by furin and PCSK5 generates a truncated inactive protein that is unable to induce LDLR degradation. Post-translationally, undergoes autocatalytic cleavage in the endoplasmic reticulum to release the propeptide from the N-terminus and the cleavage of the propeptide is strictly required for its maturation and activation. The cleaved propeptide however remains associated with the catalytic domain through non-covalent interactions, preventing potential substrates from accessing its active site. As a result, it is secreted from cells as a propeptide-containing, enzymatically inactive protein. Phosphorylation protects the propeptide against proteolysis.

It is found in the cytoplasm. Its subcellular location is the secreted. The protein localises to the endosome. It localises to the lysosome. The protein resides in the cell surface. It is found in the endoplasmic reticulum. Its subcellular location is the golgi apparatus. Its activity is regulated as follows. Its proteolytic activity is autoinhibited by the non-covalent binding of the propeptide to the catalytic domain. Inhibited by EGTA. Crucial player in the regulation of plasma cholesterol homeostasis. Binds to low-density lipid receptor family members: low density lipoprotein receptor (LDLR), very low density lipoprotein receptor (VLDLR), apolipoprotein E receptor (LRP1/APOER) and apolipoprotein receptor 2 (LRP8/APOER2), and promotes their degradation in intracellular acidic compartments. Acts via a non-proteolytic mechanism to enhance the degradation of the hepatic LDLR through a clathrin LDLRAP1/ARH-mediated pathway. May prevent the recycling of LDLR from endosomes to the cell surface or direct it to lysosomes for degradation. Can induce ubiquitination of LDLR leading to its subsequent degradation. Inhibits intracellular degradation of APOB via the autophagosome/lysosome pathway in a LDLR-independent manner. Involved in the disposal of non-acetylated intermediates of BACE1 in the early secretory pathway. Inhibits epithelial Na(+) channel (ENaC)-mediated Na(+) absorption by reducing ENaC surface expression primarily by increasing its proteasomal degradation. Regulates neuronal apoptosis via modulation of LRP8/APOER2 levels and related anti-apoptotic signaling pathways. The polypeptide is Proprotein convertase subtilisin/kexin type 9 (PCSK9) (Saimiri boliviensis boliviensis (Bolivian squirrel monkey)).